The following is a 383-amino-acid chain: S-adenosylmethionine synthase (383 aa).

Histidine 15 provides a ligand contact to ATP. Aspartate 17 serves as a coordination point for Mg(2+). Residue glutamate 43 coordinates K(+). Residues glutamate 56 and glutamine 99 each coordinate L-methionine. Residues 99–109 are flexible loop; sequence QSPDINQGVDR. Residues 164–166, 230–231, aspartate 239, 245–246, alanine 262, and lysine 266 contribute to the ATP site; these read DAK, RF, and RK. Aspartate 239 is a binding site for L-methionine. Lysine 270 is an L-methionine binding site.

It belongs to the AdoMet synthase family. Homotetramer; dimer of dimers. Requires Mg(2+) as cofactor. It depends on K(+) as a cofactor.

It localises to the cytoplasm. The catalysed reaction is L-methionine + ATP + H2O = S-adenosyl-L-methionine + phosphate + diphosphate. It participates in amino-acid biosynthesis; S-adenosyl-L-methionine biosynthesis; S-adenosyl-L-methionine from L-methionine: step 1/1. Functionally, catalyzes the formation of S-adenosylmethionine (AdoMet) from methionine and ATP. The overall synthetic reaction is composed of two sequential steps, AdoMet formation and the subsequent tripolyphosphate hydrolysis which occurs prior to release of AdoMet from the enzyme. This is S-adenosylmethionine synthase from Shewanella sp. (strain W3-18-1).